Reading from the N-terminus, the 1100-residue chain is DNA-directed RNA polymerase subunit beta (1100 aa).

The segment at 1064-1100 (YEEDKEVDLMADVNQRRTPSRPTYESMSVGDIDDDDD) is disordered. A compositionally biased stretch (polar residues) spans 1079 to 1089 (RRTPSRPTYES).

It belongs to the RNA polymerase beta chain family. As to quaternary structure, in cyanobacteria the RNAP catalytic core is composed of 2 alpha, 1 beta, 1 beta', 1 gamma and 1 omega subunit. When a sigma factor is associated with the core the holoenzyme is formed, which can initiate transcription.

It carries out the reaction RNA(n) + a ribonucleoside 5'-triphosphate = RNA(n+1) + diphosphate. Functionally, DNA-dependent RNA polymerase catalyzes the transcription of DNA into RNA using the four ribonucleoside triphosphates as substrates. This is DNA-directed RNA polymerase subunit beta from Synechococcus elongatus (strain ATCC 33912 / PCC 7942 / FACHB-805) (Anacystis nidulans R2).